The primary structure comprises 279 residues: H-2 class II histocompatibility antigen gamma chain (279 aa).

The disordered stretch occupies residues 1–23; that stretch reads MDDQRDLISNHEQLPILGNRPRE. Residues 1 to 29 lie on the Cytoplasmic side of the membrane; sequence MDDQRDLISNHEQLPILGNRPREPERCSR. The residue at position 9 (Ser9) is a Phosphoserine. A helical; Signal-anchor for type II membrane protein membrane pass occupies residues 30-55; sequence GALYTGVSVLVALLLAGQATTAYFLY. At 56 to 279 the chain is on the extracellular side; it reads QQQGRLDKLT…TRQELGQVTL (224 aa). N-linked (GlcNAc...) asparagine glycosylation is found at Asn113 and Asn119. Positions 193–254 constitute a Thyroglobulin type-1 domain; it reads LTKCQEEVSH…HTKSRGRHNC (62 aa). Intrachain disulfides connect Cys196–Cys215, Cys226–Cys233, and Cys235–Cys254. Residue Ser265 is glycosylated (O-linked (Xyl...) (chondroitin sulfate) serine).

As to quaternary structure, nonamer composed of three alpha/beta/gamma heterotrimers. Interacts with CD44; this complex is essential for the MIF-induced signaling cascade that results in B cell survival. In terms of assembly, interacts with the mature form of CTSL; the complex survive in neutral pH environment. As to expression, expressed in thymus and lymph noodes. Expressed by antigen-presenting cells (APCs). Expressed in thymus and lymph noodes.

Its subcellular location is the late endosome. It is found in the lysosome. The protein localises to the cell membrane. It localises to the endoplasmic reticulum membrane. The protein resides in the golgi apparatus. Its subcellular location is the trans-Golgi network. It is found in the endosome. The protein localises to the secreted. Functionally, plays a critical role in MHC class II antigen processing by stabilizing peptide-free class II alpha/beta heterodimers in a complex soon after their synthesis and directing transport of the complex from the endoplasmic reticulum to compartments where peptide loading of class II takes place. Enhance also the stimulation of T-cell responses through interaction with CD44. In terms of biological role, stabilizes the conformation of mature CTSL by binding to its active site and serving as a chaperone to help maintain a pool of mature enzyme in endocytic compartments and extracellular space of antigen-presenting cells (APCs). Binds to the peptide-binding site of MHC class II alpha/beta heterodimers forming an alpha-beta-CLIP complex, thereby preventing the loading of antigenic peptides to the MHC class II complex until its release by HLA-DM in the endosome. This Mus musculus (Mouse) protein is H-2 class II histocompatibility antigen gamma chain.